The following is a 192-amino-acid chain: Erythropoietin (192 aa).

Residues 1–26 (MGVPERPTLLLLLSLLLIPLGLPVLC) form the signal peptide. Cysteines 33 and 187 form a disulfide. N-linked (GlcNAc...) asparagine glycosylation is found at Asn-50, Asn-64, and Asn-109.

Belongs to the EPO/TPO family. As to expression, produced by kidney or liver of adult mammals and by liver of fetal or neonatal mammals.

It localises to the secreted. Functionally, hormone involved in the regulation of erythrocyte proliferation and differentiation and the maintenance of a physiological level of circulating erythrocyte mass. Binds to EPOR leading to EPOR dimerization and JAK2 activation thereby activating specific downstream effectors, including STAT1 and STAT3. The polypeptide is Erythropoietin (Epo) (Rattus norvegicus (Rat)).